A 324-amino-acid chain; its full sequence is MENLKIIVINLKRRTDRREIMEKKFQDENITQYEFFEAFDGETLRPEDPILGVFKHGVHGLSRKGVAGCALSHYTVWQKIAADTSGTKYLVLEDDINFKPNFKENLSKVMKTIEPSQAMILIGMTVNGDDVTKTRDIYELDTSYTIHPLGRDYYAGGLFGYILDYRAAQYFVDYISYNGIRIVIDYLTYRSGFPMYESHPHLVYTQSVQHDGEHVDSDIQHQYDRIKYAIIPNTYEFDDYVFIPNKDSAGGDIREVCADIPILKNIADKDINCVAFNTYGWVKNNIKPLHQLIDIGNRYYESDGIYIKKNYLLKEKIIINSLNL.

It belongs to the glycosyltransferase 25 family.

The polypeptide is Putative glycosyltransferase R655 (Acanthamoeba polyphaga (Amoeba)).